The sequence spans 610 residues: UvrABC system protein C (610 aa).

The GIY-YIG domain occupies 16–94 (SQPGVYRMYD…IKLYQPRYNV (79 aa)). The UVR domain maps to 204 to 239 (DQVLTQLIARMEKASQDLAFEEAARIRDQIQAVRRV).

This sequence belongs to the UvrC family. As to quaternary structure, interacts with UvrB in an incision complex.

Its subcellular location is the cytoplasm. Functionally, the UvrABC repair system catalyzes the recognition and processing of DNA lesions. UvrC both incises the 5' and 3' sides of the lesion. The N-terminal half is responsible for the 3' incision and the C-terminal half is responsible for the 5' incision. In Salmonella gallinarum (strain 287/91 / NCTC 13346), this protein is UvrABC system protein C.